The following is a 242-amino-acid chain: Biosynthetic peptidoglycan transglycosylase (242 aa).

Residues 19-39 (ILAALAVFWGGGIALFSVVPV) traverse the membrane as a helical segment.

This sequence belongs to the glycosyltransferase 51 family.

Its subcellular location is the cell inner membrane. The catalysed reaction is [GlcNAc-(1-&gt;4)-Mur2Ac(oyl-L-Ala-gamma-D-Glu-L-Lys-D-Ala-D-Ala)](n)-di-trans,octa-cis-undecaprenyl diphosphate + beta-D-GlcNAc-(1-&gt;4)-Mur2Ac(oyl-L-Ala-gamma-D-Glu-L-Lys-D-Ala-D-Ala)-di-trans,octa-cis-undecaprenyl diphosphate = [GlcNAc-(1-&gt;4)-Mur2Ac(oyl-L-Ala-gamma-D-Glu-L-Lys-D-Ala-D-Ala)](n+1)-di-trans,octa-cis-undecaprenyl diphosphate + di-trans,octa-cis-undecaprenyl diphosphate + H(+). It functions in the pathway cell wall biogenesis; peptidoglycan biosynthesis. Its function is as follows. Peptidoglycan polymerase that catalyzes glycan chain elongation from lipid-linked precursors. This Salmonella paratyphi A (strain ATCC 9150 / SARB42) protein is Biosynthetic peptidoglycan transglycosylase.